Consider the following 132-residue polypeptide: Small ribosomal subunit protein uS19 (132 aa).

This sequence belongs to the universal ribosomal protein uS19 family.

Protein S19 forms a complex with S13 that binds strongly to the 16S ribosomal RNA. The sequence is that of Small ribosomal subunit protein uS19 from Korarchaeum cryptofilum (strain OPF8).